A 387-amino-acid chain; its full sequence is Solute carrier family 25 protein Shawn (387 aa).

Solcar repeat units lie at residues 37 to 156 (IRPL…FKAR), 179 to 263 (IPFL…LKSS), and 269 to 366 (PTFS…GKSF). Transmembrane regions (helical) follow at residues 43–63 (VASA…LDVI), 128–148 (LWSG…IYFV), 179–199 (IPFL…VTCV), 235–255 (LWRG…IYWT), 275–295 (FAAG…FDVV), and 337–357 (AIFS…AIMI).

It belongs to the mitochondrial carrier (TC 2.A.29) family.

The protein resides in the mitochondrion inner membrane. Its function is as follows. Mitochondrial transporter required for glutathione import into mitochondria. The sequence is that of Solute carrier family 25 protein Shawn from Drosophila melanogaster (Fruit fly).